A 560-amino-acid polypeptide reads, in one-letter code: 2-succinylbenzoate--CoA ligase, chloroplastic/peroxisomal (560 aa).

A chloroplast-targeting transit peptide spans 1-15; sequence MANHSRPHICQCLTR. The next 3 membrane-spanning stretches (helical) occupy residues 69–89, 189–209, and 225–245; these read LFLE…PLNY, GVTI…AIAG, and IGGL…VLLP. The Microbody targeting signal motif lies at 558 to 560; that stretch reads SSL.

The protein belongs to the ATP-dependent AMP-binding enzyme family. MenE subfamily. In terms of tissue distribution, high expression in young leaves and flowers. Not expressed in roots.

It localises to the plastid. The protein localises to the chloroplast membrane. The protein resides in the peroxisome membrane. The enzyme catalyses 2-succinylbenzoate + ATP + CoA = 2-succinylbenzoyl-CoA + AMP + diphosphate. Involved in the biosynthesis of phylloquinone (vitamin K1). Converts 2-succinylbenzoate (OSB) to 2-succinylbenzoyl-CoA (OSB-CoA). This is 2-succinylbenzoate--CoA ligase, chloroplastic/peroxisomal (AAE14) from Arabidopsis thaliana (Mouse-ear cress).